We begin with the raw amino-acid sequence, 389 residues long: Phospho-N-acetylmuramoyl-pentapeptide-transferase (389 aa).

10 consecutive transmembrane segments (helical) span residues phenylalanine 21–glycine 41, glycine 70–tryptophan 90, phenylalanine 97–tyrosine 117, tyrosine 134–alanine 154, threonine 189–glycine 209, glycine 222–threonine 242, alanine 259–phenylalanine 279, valine 286–isoleucine 306, valine 311–valine 331, and glutamine 366–leucine 386.

It belongs to the glycosyltransferase 4 family. MraY subfamily. Mg(2+) serves as cofactor.

The protein resides in the cell inner membrane. It catalyses the reaction UDP-N-acetyl-alpha-D-muramoyl-L-alanyl-gamma-D-glutamyl-meso-2,6-diaminopimeloyl-D-alanyl-D-alanine + di-trans,octa-cis-undecaprenyl phosphate = di-trans,octa-cis-undecaprenyl diphospho-N-acetyl-alpha-D-muramoyl-L-alanyl-D-glutamyl-meso-2,6-diaminopimeloyl-D-alanyl-D-alanine + UMP. It participates in cell wall biogenesis; peptidoglycan biosynthesis. Functionally, catalyzes the initial step of the lipid cycle reactions in the biosynthesis of the cell wall peptidoglycan: transfers peptidoglycan precursor phospho-MurNAc-pentapeptide from UDP-MurNAc-pentapeptide onto the lipid carrier undecaprenyl phosphate, yielding undecaprenyl-pyrophosphoryl-MurNAc-pentapeptide, known as lipid I. The polypeptide is Phospho-N-acetylmuramoyl-pentapeptide-transferase (Janthinobacterium sp. (strain Marseille) (Minibacterium massiliensis)).